Here is a 72-residue protein sequence, read N- to C-terminus: Translation initiation factor IF-1 (72 aa).

The S1-like domain occupies 1–72 (MSKDDVIEMQ…TRGRITWRAK (72 aa)).

It belongs to the IF-1 family. Component of the 30S ribosomal translation pre-initiation complex which assembles on the 30S ribosome in the order IF-2 and IF-3, IF-1 and N-formylmethionyl-tRNA(fMet); mRNA recruitment can occur at any time during PIC assembly.

The protein resides in the cytoplasm. Its function is as follows. One of the essential components for the initiation of protein synthesis. Stabilizes the binding of IF-2 and IF-3 on the 30S subunit to which N-formylmethionyl-tRNA(fMet) subsequently binds. Helps modulate mRNA selection, yielding the 30S pre-initiation complex (PIC). Upon addition of the 50S ribosomal subunit IF-1, IF-2 and IF-3 are released leaving the mature 70S translation initiation complex. The polypeptide is Translation initiation factor IF-1 (Clostridium botulinum (strain ATCC 19397 / Type A)).